We begin with the raw amino-acid sequence, 218 residues long: Adenylate kinase (218 aa).

10 to 15 serves as a coordination point for ATP; sequence GAGKGT. The interval 30–59 is NMP; that stretch reads STGDMLRAAINEGTPLGLEAKKVMDAGKLV. AMP contacts are provided by residues threonine 31, arginine 36, 57 to 59, 85 to 88, and glutamine 92; these read KLV and GFPR. The segment at 122–159 is LID; the sequence is GRRVHPASGRTYHVLFNPPAKEGVDDITGDPLVQREDD. Residues arginine 123 and 132–133 contribute to the ATP site; that span reads TY. The AMP site is built by arginine 156 and arginine 167. Glycine 203 lines the ATP pocket.

The protein belongs to the adenylate kinase family. Monomer.

It localises to the cytoplasm. The enzyme catalyses AMP + ATP = 2 ADP. It participates in purine metabolism; AMP biosynthesis via salvage pathway; AMP from ADP: step 1/1. Functionally, catalyzes the reversible transfer of the terminal phosphate group between ATP and AMP. Plays an important role in cellular energy homeostasis and in adenine nucleotide metabolism. In Chlorobium phaeobacteroides (strain BS1), this protein is Adenylate kinase.